Here is a 267-residue protein sequence, read N- to C-terminus: Putative phosphatase bbp_030 (267 aa).

The active-site Nucleophile is D8. D8 provides a ligand contact to Mg(2+). L9 provides a ligand contact to phosphate. Residue D10 participates in Mg(2+) binding. Phosphate contacts are provided by residues 42-43 and K191; that span reads TG. D214 lines the Mg(2+) pocket. N217 provides a ligand contact to phosphate.

The protein belongs to the HAD-like hydrolase superfamily. Cof family. It depends on Mg(2+) as a cofactor.

The chain is Putative phosphatase bbp_030 from Buchnera aphidicola subsp. Baizongia pistaciae (strain Bp).